The primary structure comprises 135 residues: Holo-[acyl-carrier-protein] synthase (135 aa).

Mg(2+)-binding residues include D7 and E57.

The protein belongs to the P-Pant transferase superfamily. AcpS family. The cofactor is Mg(2+).

The protein resides in the cytoplasm. The enzyme catalyses apo-[ACP] + CoA = holo-[ACP] + adenosine 3',5'-bisphosphate + H(+). Its function is as follows. Transfers the 4'-phosphopantetheine moiety from coenzyme A to a Ser of acyl-carrier-protein. The sequence is that of Holo-[acyl-carrier-protein] synthase from Corynebacterium glutamicum (strain R).